The primary structure comprises 537 residues: Atrial natriuretic peptide receptor 3 (537 aa).

The first 20 residues, 1-20, serve as a signal peptide directing secretion; that stretch reads MPSLLVLTFSACVLLGWALL. Positions 21 to 41 are excised as a propeptide; it reads ADCTGGGGSGGAGPGRGRRER. The Extracellular portion of the chain corresponds to 42 to 477; sequence EALPPQKIEV…PCKASGGLEE (436 aa). N82 carries an N-linked (GlcNAc...) asparagine glycan. 2 disulfides stabilise this stretch: C104–C132 and C209–C257. Residues N289 and N390 are each glycosylated (N-linked (GlcNAc...) asparagine). A helical membrane pass occupies residues 478-500; the sequence is SAVTGIVVGALLGAGLLMAFYFF. Residues 501–537 are Cytoplasmic-facing; the sequence is RKKYRITIERRNQQEESNVGKHRELREDSIRSHFSVA.

This sequence belongs to the ANF receptor family. Homodimer; disulfide-linked. Interacts with OSTN.

It localises to the cell membrane. In terms of biological role, receptor for the natriuretic peptide hormones, binding with similar affinities atrial natriuretic peptide NPPA/ANP, brain natriuretic peptide NPPB/BNP, and C-type natriuretic peptide NPPC/CNP. May function as a clearance receptor for NPPA, NPPB and NPPC, regulating their local concentrations and effects. Acts as a regulator of osteoblast differentiation and bone growth by binding to its ligand osteocrin, thereby preventing binding between NPR3/NPR-C and natriuretic peptides, leading to increase cGMP production. The sequence is that of Atrial natriuretic peptide receptor 3 (NPR3) from Bos taurus (Bovine).